Here is a 408-residue protein sequence, read N- to C-terminus: MLTDLTFIHAADLHLDSPFYGISHLPEPIFARIKESTFASVRHMIDAAVREHVDFILLAGDLFDEANRSLKAQLFLKKQFERLRECGISVYVIFGNHDHLGGEWTPIEWPENVHIFSSAVPEEKSFFKEGRRIASIYGFSYQARALMENQAARYRRSTDAPFHIGMLHGTLSGSEGHDPYCPFTHDDLVKSGMDYWALGHIHKRQVLSAEHPAVIYPGNTQARHIKETGDKGYYLVHVTNGDISYEFQRAHDVLWEKAAVDVTEAKNMTALFQMVEDTFSKLRKKGSPVCVRLVLQGTAPEWLLEAPKGTLDEFLEALQEQEAEEERFVWPLRLDDETENEANLTNLDPFFGGLFEDIDRSDLSDVLEGLERHPVYRRHADRFSQEEVKEIKEQAQIILKRQLKVLDT.

A divalent metal cation-binding residues include E35, D61, and N96.

The protein belongs to the metallophosphoesterase superfamily. It depends on a divalent metal cation as a cofactor.

This is an uncharacterized protein from Bacillus subtilis (strain 168).